A 287-amino-acid polypeptide reads, in one-letter code: tRNA pseudouridine synthase B (287 aa).

Asp38 functions as the Nucleophile in the catalytic mechanism.

It belongs to the pseudouridine synthase TruB family. Type 1 subfamily.

The catalysed reaction is uridine(55) in tRNA = pseudouridine(55) in tRNA. Functionally, responsible for synthesis of pseudouridine from uracil-55 in the psi GC loop of transfer RNAs. This is tRNA pseudouridine synthase B from Aquifex aeolicus (strain VF5).